The chain runs to 61 residues: Beta-insect depressant toxin BaIT2 (61 aa).

The region spanning 1-61 (DGYIRRRDGC…TWKSETNTCG (61 aa)) is the LCN-type CS-alpha/beta domain. Cystine bridges form between Cys10–Cys60, Cys14–Cys35, Cys21–Cys42, and Cys25–Cys44.

Belongs to the long (4 C-C) scorpion toxin superfamily. Sodium channel inhibitor family. Beta subfamily. As to expression, expressed by the venom gland.

It localises to the secreted. Its function is as follows. Depressant insect beta-toxins cause a transient contraction paralysis followed by a slow flaccid paralysis. They bind voltage-independently at site-4 of sodium channels (Nav) and shift the voltage of activation toward more negative potentials thereby affecting sodium channel activation and promoting spontaneous and repetitive firing. This toxin is active only on insects. In Buthacus arenicola (North African scorpion), this protein is Beta-insect depressant toxin BaIT2.